We begin with the raw amino-acid sequence, 374 residues long: Alanine racemase (374 aa).

Lys-34 functions as the Proton acceptor; specific for D-alanine in the catalytic mechanism. Lys-34 is modified (N6-(pyridoxal phosphate)lysine). Residue Arg-147 coordinates substrate. Tyr-271 functions as the Proton acceptor; specific for L-alanine in the catalytic mechanism. Met-319 is a binding site for substrate.

It belongs to the alanine racemase family. The cofactor is pyridoxal 5'-phosphate.

It carries out the reaction L-alanine = D-alanine. Its pathway is amino-acid biosynthesis; D-alanine biosynthesis; D-alanine from L-alanine: step 1/1. Functionally, catalyzes the interconversion of L-alanine and D-alanine. May also act on other amino acids. This is Alanine racemase (alr) from Actinobacillus pleuropneumoniae serotype 5b (strain L20).